The primary structure comprises 551 residues: Methionine--tRNA ligase (551 aa).

Positions 12 to 22 (PYANGPLHFGH) match the 'HIGH' region motif. Residues Cys-144, Cys-147, Cys-157, and Cys-160 each coordinate Zn(2+). Residues 330–334 (QFSKS) carry the 'KMSKS' region motif. Lys-333 lines the ATP pocket.

It belongs to the class-I aminoacyl-tRNA synthetase family. MetG type 1 subfamily. Monomer. It depends on Zn(2+) as a cofactor.

The protein resides in the cytoplasm. It catalyses the reaction tRNA(Met) + L-methionine + ATP = L-methionyl-tRNA(Met) + AMP + diphosphate. Its function is as follows. Is required not only for elongation of protein synthesis but also for the initiation of all mRNA translation through initiator tRNA(fMet) aminoacylation. The polypeptide is Methionine--tRNA ligase (Chlamydia abortus (strain DSM 27085 / S26/3) (Chlamydophila abortus)).